A 237-amino-acid polypeptide reads, in one-letter code: Demethylmenaquinone methyltransferase (237 aa).

S-adenosyl-L-methionine-binding positions include threonine 58, aspartate 79, and 106–107 (NA).

Belongs to the class I-like SAM-binding methyltransferase superfamily. MenG/UbiE family.

It catalyses the reaction a 2-demethylmenaquinol + S-adenosyl-L-methionine = a menaquinol + S-adenosyl-L-homocysteine + H(+). It participates in quinol/quinone metabolism; menaquinone biosynthesis; menaquinol from 1,4-dihydroxy-2-naphthoate: step 2/2. Methyltransferase required for the conversion of demethylmenaquinol (DMKH2) to menaquinol (MKH2). The chain is Demethylmenaquinone methyltransferase from Anoxybacillus flavithermus (strain DSM 21510 / WK1).